The following is a 316-amino-acid chain: DNA-directed RNA polymerase III subunit RPC6 (316 aa).

Position 2 is an N-acetylalanine (alanine 2). Residues lysine 5 and lysine 7 each participate in a glycyl lysine isopeptide (Lys-Gly) (interchain with G-Cter in SUMO2) cross-link. Residues cysteine 287, cysteine 290, cysteine 296, and cysteine 307 each coordinate [4Fe-4S] cluster.

The protein belongs to the eukaryotic RPC34/RPC39 RNA polymerase subunit family. Component of the RNA polymerase III complex consisting of 17 subunits: a ten-subunit horseshoe-shaped catalytic core composed of POLR3A/RPC1, POLR3B/RPC2, POLR1C/RPAC1, POLR1D/RPAC2, POLR3K/RPC10, POLR2E/RPABC1, POLR2F/RPABC2, POLR2H/RPABC3, POLR2K/RPABC4 and POLR2L/RPABC5; a mobile stalk composed of two subunits POLR3H/RPC8 and CRCP/RPC9, protruding from the core and functioning primarily in transcription initiation; and additional subunits homologous to general transcription factors of the RNA polymerase II machinery, POLR3C/RPC3-POLR3F/RPC6-POLR3G/RPC7 heterotrimer required for transcription initiation and POLR3D/RPC4-POLR3E/RPC5 heterodimer involved in both transcription initiation and termination. Directly interacts with POLR3C. Interacts with TBP and TFIIIB90 and GTF3C4. Interacts with MAF1. As part of the RNA polymerase III complex, interacts with PKP2.

Its subcellular location is the nucleus. Functionally, DNA-dependent RNA polymerase catalyzes the transcription of DNA into RNA using the four ribonucleoside triphosphates as substrates. Specific peripheric component of RNA polymerase III (Pol III) which synthesizes small non-coding RNAs including 5S rRNA, snRNAs, tRNAs and miRNAs from at least 500 distinct genomic loci. Part of POLR3C/RPC3-POLR3F/RPC6-POLR3G/RPC7 heterotrimer that coordinates the dynamics of Pol III stalk and clamp modules during the transition from apo to elongation state. Pol III plays a key role in sensing and limiting infection by intracellular bacteria and DNA viruses, including varicella zoster virus. Acts as a nuclear and cytosolic DNA sensor detecting AT-rich DNA, involved in innate immune response. Can sense non-self dsDNA that serves as template for transcription into dsRNA. The non-self RNA polymerase III transcripts, such as Epstein-Barr virus-encoded RNAs (EBERs) induce type I interferon and NF-kappa-B through the RIG-I pathway. Preferentially binds double-stranded DNA (dsDNA). The protein is DNA-directed RNA polymerase III subunit RPC6 of Mus musculus (Mouse).